The following is a 256-amino-acid chain: MVKSHIGSWILVLFVAMWSDVGLCKKRPKPGGGWNTGGSRYPGQGSPGGNRYPPQGGGGWGQPHGGGWGQPHGGGWGQPHGGGWGQPHGGGGWGQGGTHSQWNKPSKPKTNMKHVAGAAAAGAVVGGLGGYMLGSAMNRPLIHFGNDYEDRYYRENMYRYPNQVYYRPVDQYNNQNTFVHDCVNITVKQHTVTTTTKGENFTETDIKMMERVVEQMCITQYQRESQAYYQRGASVILFSSPPVILLISFLIFLIVG.

The first 24 residues, methionine 1–cysteine 24, serve as a signal peptide directing secretion. The interaction with GRB2, ERI3 and SYN1 stretch occupies residues lysine 25–alanine 233. The disordered stretch occupies residues proline 28–threonine 110. A run of 5 repeats spans residues proline 54–glutamine 62, proline 63–glutamine 70, proline 71–glutamine 78, proline 79–glutamine 86, and proline 87–glutamine 95. The tract at residues proline 54–glutamine 95 is 5 X 8 AA tandem repeats of P-H-G-G-G-W-G-Q. Residues glutamine 55 to glycine 97 show a composition bias toward gly residues. Residues histidine 64, glycine 65, glycine 66, histidine 72, glycine 73, glycine 74, histidine 80, glycine 81, glycine 82, histidine 88, glycine 90, and glycine 91 each coordinate Cu(2+). Cysteine 182 and cysteine 217 are oxidised to a cystine. Residues asparagine 184 and asparagine 200 are each glycosylated (N-linked (GlcNAc...) asparagine). The GPI-anchor amidated alanine moiety is linked to residue alanine 233. A propeptide spans serine 234–glycine 256 (removed in mature form).

The protein belongs to the prion family. As to quaternary structure, monomer and homodimer. Has a tendency to aggregate into amyloid fibrils containing a cross-beta spine, formed by a steric zipper of superposed beta-strands. Soluble oligomers may represent an intermediate stage on the path to fibril formation. Copper binding may promote oligomerization. Interacts with GRB2, APP, ERI3/PRNPIP and SYN1. Mislocalized cytosolically exposed PrP interacts with MGRN1; this interaction alters MGRN1 subcellular location and causes lysosomal enlargement. Interacts with KIAA1191.

The protein localises to the cell membrane. Its subcellular location is the golgi apparatus. Its function is as follows. Its primary physiological function is unclear. Has cytoprotective activity against internal or environmental stresses. May play a role in neuronal development and synaptic plasticity. May be required for neuronal myelin sheath maintenance. May play a role in iron uptake and iron homeostasis. Soluble oligomers are toxic to cultured neuroblastoma cells and induce apoptosis (in vitro). Association with GPC1 (via its heparan sulfate chains) targets PRNP to lipid rafts. Also provides Cu(2+) or Zn(2+) for the ascorbate-mediated GPC1 deaminase degradation of its heparan sulfate side chains. The sequence is that of Major prion protein (PRNP) from Odocoileus hemionus (Mule deer).